Reading from the N-terminus, the 428-residue chain is Monocarboxylate transporter 13 (428 aa).

At 1–10 the chain is on the cytoplasmic side; the sequence is MVHRTEPPDG. Transmembrane regions (helical) follow at residues 11–31, 52–72, 81–101, 106–126, 139–159, 172–192, 221–241, 244–264, 283–303, 309–329, 338–358, and 374–394; these read GWGW…FGVL, VSWI…IGSA, PVVM…SFAT, LYLS…TPTL, LAMG…APLF, LLLV…LRPL, VALT…VAHL, LGWD…SDLV, LLML…VAQA, VLAV…FSVI, IYCG…LGAP, and FVVA…LPHF. Over 395 to 428 the chain is Cytoplasmic; the sequence is FSCISLSTSRPQDLVIEAPDTKIPLPKEEGLGEN.

It belongs to the major facilitator superfamily. Monocarboxylate porter (TC 2.A.1.13) family.

The protein resides in the golgi apparatus membrane. The protein localises to the cell membrane. In terms of biological role, proton-linked monocarboxylate transporter. May catalyze the transport of monocarboxylates across the plasma membrane. In Rattus norvegicus (Rat), this protein is Monocarboxylate transporter 13 (Slc16a13).